Consider the following 382-residue polypeptide: 8-amino-7-oxononanoate synthase (382 aa).

A substrate-binding site is contributed by Arg-26. Residue 104-105 (GY) participates in pyridoxal 5'-phosphate binding. His-129 contacts substrate. Pyridoxal 5'-phosphate is bound by residues Ser-175, 200-203 (DEAH), and 232-235 (TLSK). An N6-(pyridoxal phosphate)lysine modification is found at Lys-235. Thr-345 serves as a coordination point for substrate.

This sequence belongs to the class-II pyridoxal-phosphate-dependent aminotransferase family. BioF subfamily. As to quaternary structure, homodimer. Requires pyridoxal 5'-phosphate as cofactor.

The enzyme catalyses 6-carboxyhexanoyl-[ACP] + L-alanine + H(+) = (8S)-8-amino-7-oxononanoate + holo-[ACP] + CO2. It functions in the pathway cofactor biosynthesis; biotin biosynthesis. Functionally, catalyzes the decarboxylative condensation of pimeloyl-[acyl-carrier protein] and L-alanine to produce 8-amino-7-oxononanoate (AON), [acyl-carrier protein], and carbon dioxide. The protein is 8-amino-7-oxononanoate synthase of Mycobacterium sp. (strain KMS).